Consider the following 306-residue polypeptide: Golgi to ER traffic protein 2 (306 aa).

Over residues 1–18 (MSEISDAEKRRILREKRQ) the composition is skewed to basic and acidic residues. Residues 1–100 (MSEISDAEKR…PPGSAEQQNG (100 aa)) are disordered. Residues 1 to 172 (MSEISDAEKR…VEAHNIAVNK (172 aa)) are Cytoplasmic-facing. The segment covering 34–57 (TGQTENSFLSTESPLDSRESTYPA) has biased composition (polar residues). Basic and acidic residues predominate over residues 68–77 (DSTKQMDELL). Residues 78–90 (AKATSKTTSKASS) are compositionally biased toward low complexity. Residues 91–100 (PPGSAEQQNG) are compositionally biased toward polar residues. A helical membrane pass occupies residues 173 to 193 (LKSYTILVKWLFFLLPYLYYI). Topologically, residues 194-214 (THSARDPFQHNAVNYVLDRSN) are lumenal. The chain crosses the membrane as a helical span at residues 215 to 234 (FFTVFTTFEIVALSVYYQLL). The Cytoplasmic portion of the chain corresponds to 235 to 281 (MSAEKSHNVNTLDNNSKILKLVSMVPPGLVPIPNLRGKVAQALQYWD). The chain crosses the membrane as a helical span at residues 282–302 (VVSMYLTDLCFAIVLAGLFQY). The Lumenal segment spans residues 303-306 (YHSM).

It belongs to the GET2 family. Component of the Golgi to ER traffic (GET) complex, which is composed of GET1, GET2 and GET3. Within the complex, GET1 and GET2 form a heterotetramer which is stabilized by phosphatidylinositol binding and which binds to the GET3 homodimer.

It localises to the endoplasmic reticulum membrane. Its subcellular location is the golgi apparatus membrane. Functionally, required for the post-translational delivery of tail-anchored (TA) proteins to the endoplasmic reticulum. Together with GET1, acts as a membrane receptor for soluble GET3, which recognizes and selectively binds the transmembrane domain of TA proteins in the cytosol. The GET complex cooperates with the HDEL receptor ERD2 to mediate the ATP-dependent retrieval of resident ER proteins that contain a C-terminal H-D-E-L retention signal from the Golgi to the ER. The chain is Golgi to ER traffic protein 2 from Lachancea thermotolerans (strain ATCC 56472 / CBS 6340 / NRRL Y-8284) (Yeast).